The chain runs to 232 residues: RNA chaperone ProQ (232 aa).

Residues 105 to 182 (EAKARVQAQR…REEQHTPVSD (78 aa)) form a disordered region. A compositionally biased stretch (basic and acidic residues) spans 117–136 (QQAKKREAAAAAGEKEDAPR). The segment covering 137–146 (RERKPRPTTP) has biased composition (basic residues). Basic and acidic residues predominate over residues 147–177 (RRKEGAERKPRAQKPVEKAPKTVKAPREEQH).

This sequence belongs to the ProQ family.

Its subcellular location is the cytoplasm. In terms of biological role, RNA chaperone with significant RNA binding, RNA strand exchange and RNA duplexing activities. May regulate ProP activity through an RNA-based, post-transcriptional mechanism. The chain is RNA chaperone ProQ from Shigella boydii serotype 18 (strain CDC 3083-94 / BS512).